Consider the following 266-residue polypeptide: Putative pyruvate, phosphate dikinase regulatory protein (266 aa).

147 to 154 (GLSRTSKT) serves as a coordination point for ADP.

It belongs to the pyruvate, phosphate/water dikinase regulatory protein family. PDRP subfamily.

The catalysed reaction is N(tele)-phospho-L-histidyl/L-threonyl-[pyruvate, phosphate dikinase] + ADP = N(tele)-phospho-L-histidyl/O-phospho-L-threonyl-[pyruvate, phosphate dikinase] + AMP + H(+). It catalyses the reaction N(tele)-phospho-L-histidyl/O-phospho-L-threonyl-[pyruvate, phosphate dikinase] + phosphate + H(+) = N(tele)-phospho-L-histidyl/L-threonyl-[pyruvate, phosphate dikinase] + diphosphate. Its function is as follows. Bifunctional serine/threonine kinase and phosphorylase involved in the regulation of the pyruvate, phosphate dikinase (PPDK) by catalyzing its phosphorylation/dephosphorylation. The polypeptide is Putative pyruvate, phosphate dikinase regulatory protein (Clostridium perfringens (strain SM101 / Type A)).